A 299-amino-acid polypeptide reads, in one-letter code: MQNELDAYFEYLRSARQLSGHSLDAYRRDLDKVLTYCERERIAGWRDLQGRHLRHLIAEQHRQGQSSRSLARLLSSVRGLYRYLNQEGLCEHDPATGLSAPKGERRLPRLLDTDRAMQLLDGGVEDDFIARRDQAMLELFYSSGLRLSELVGLNLDQLDLAAGLVRVLGKGNKVRELPVGSKAREALQAWLPLRTLAGPADGAVFIGQQGRRLGARAVQLRVRQAGVRELGQHLHPHMLRHSFASHLLESSQDLRSVQELLGHADIGTTQIYTHLDFQHLAKVYDHAHPRAKRKQDTDT.

Residues 1–85 (MQNELDAYFE…SVRGLYRYLN (85 aa)) enclose the Core-binding (CB) domain. The Tyr recombinase domain occupies 106–285 (RLPRLLDTDR…DFQHLAKVYD (180 aa)). Residues arginine 146, lysine 170, histidine 237, arginine 240, and histidine 263 contribute to the active site. Tyrosine 272 serves as the catalytic O-(3'-phospho-DNA)-tyrosine intermediate.

It belongs to the 'phage' integrase family. XerC subfamily. In terms of assembly, forms a cyclic heterotetrameric complex composed of two molecules of XerC and two molecules of XerD.

The protein localises to the cytoplasm. In terms of biological role, site-specific tyrosine recombinase, which acts by catalyzing the cutting and rejoining of the recombining DNA molecules. The XerC-XerD complex is essential to convert dimers of the bacterial chromosome into monomers to permit their segregation at cell division. It also contributes to the segregational stability of plasmids. This is Tyrosine recombinase XerC from Stutzerimonas stutzeri (strain A1501) (Pseudomonas stutzeri).